The primary structure comprises 109 residues: Hainantoxin-XVIII-4 (109 aa).

The N-terminal stretch at 1–18 (MKLSIIIIATSLVIAVVA) is a signal peptide. Positions 19–46 (FPSKDSKAIENDKTEQRMEIVVQETARA) are excised as a propeptide. Intrachain disulfides connect C55/C68, C59/C108, and C61/C81.

This sequence belongs to the neurotoxin 25 family. F7 subfamily. As to expression, expressed by the venom gland.

The protein localises to the secreted. Functionally, putative ion channel inhibitor. The polypeptide is Hainantoxin-XVIII-4 (Cyriopagopus hainanus (Chinese bird spider)).